The sequence spans 523 residues: Glutamate--cysteine ligase (523 aa).

This sequence belongs to the glutamate--cysteine ligase type 1 family. Type 1 subfamily.

It carries out the reaction L-cysteine + L-glutamate + ATP = gamma-L-glutamyl-L-cysteine + ADP + phosphate + H(+). Its pathway is sulfur metabolism; glutathione biosynthesis; glutathione from L-cysteine and L-glutamate: step 1/2. The polypeptide is Glutamate--cysteine ligase (Baumannia cicadellinicola subsp. Homalodisca coagulata).